A 330-amino-acid polypeptide reads, in one-letter code: Anthranilate phosphoribosyltransferase (330 aa).

5-phospho-alpha-D-ribose 1-diphosphate is bound by residues Gly-75, 78–79, Thr-83, 85–88, 103–111, and Ala-115; these read GD, NVST, and KHGNRAASS. Gly-75 is an anthranilate binding site. Ser-87 is a Mg(2+) binding site. Asn-106 lines the anthranilate pocket. An anthranilate-binding site is contributed by Arg-161. The Mg(2+) site is built by Asp-220 and Glu-221.

It belongs to the anthranilate phosphoribosyltransferase family. As to quaternary structure, homodimer. Mg(2+) is required as a cofactor.

The catalysed reaction is N-(5-phospho-beta-D-ribosyl)anthranilate + diphosphate = 5-phospho-alpha-D-ribose 1-diphosphate + anthranilate. Its pathway is amino-acid biosynthesis; L-tryptophan biosynthesis; L-tryptophan from chorismate: step 2/5. Functionally, catalyzes the transfer of the phosphoribosyl group of 5-phosphorylribose-1-pyrophosphate (PRPP) to anthranilate to yield N-(5'-phosphoribosyl)-anthranilate (PRA). This Novosphingobium aromaticivorans (strain ATCC 700278 / DSM 12444 / CCUG 56034 / CIP 105152 / NBRC 16084 / F199) protein is Anthranilate phosphoribosyltransferase.